Consider the following 657-residue polypeptide: Probable Xaa-Pro aminopeptidase P (657 aa).

4 residues coordinate Mn(2+): aspartate 453, aspartate 464, glutamate 562, and glutamate 576.

The protein belongs to the peptidase M24B family. Requires Mn(2+) as cofactor.

The enzyme catalyses Release of any N-terminal amino acid, including proline, that is linked to proline, even from a dipeptide or tripeptide.. Functionally, catalyzes the removal of a penultimate prolyl residue from the N-termini of peptides. The chain is Probable Xaa-Pro aminopeptidase P (ampp) from Talaromyces marneffei (strain ATCC 18224 / CBS 334.59 / QM 7333) (Penicillium marneffei).